Reading from the N-terminus, the 122-residue chain is Large ribosomal subunit protein uL18 (122 aa).

The protein belongs to the universal ribosomal protein uL18 family. As to quaternary structure, part of the 50S ribosomal subunit; part of the 5S rRNA/L5/L18/L25 subcomplex. Contacts the 5S and 23S rRNAs.

Functionally, this is one of the proteins that bind and probably mediate the attachment of the 5S RNA into the large ribosomal subunit, where it forms part of the central protuberance. This chain is Large ribosomal subunit protein uL18, found in Desulfatibacillum aliphaticivorans.